The sequence spans 90 residues: Auxin-responsive protein SAUR24 (90 aa).

This sequence belongs to the ARG7 family.

The protein localises to the cell membrane. Its function is as follows. Functions as a positive effector of cell expansion through modulation of auxin transport. The chain is Auxin-responsive protein SAUR24 from Arabidopsis thaliana (Mouse-ear cress).